Consider the following 389-residue polypeptide: Phospholipid phosphatase-related protein type 2 (389 aa).

A run of 2 helical transmembrane segments spans residues 14-34 (IIPC…AFFP) and 66-86 (FLGV…AGQV). Residue Asn102 is glycosylated (N-linked (GlcNAc...) asparagine). A run of 3 helical transmembrane segments spans residues 147–167 (AALC…VFRV), 176–196 (SLCL…VAEY), and 203–223 (VLAG…CVVH). 2 positions are modified to phosphoserine: Ser236 and Ser249. 2 disordered regions span residues 255 to 280 (SVAQ…PQNC) and 295 to 351 (APAM…GRKL). Residues 265 to 278 (SHSTPARLTPSKPQ) show a composition bias toward polar residues. Over residues 314–339 (TPLPLPLPLPAPAPSQGPSPSSPGPG) the composition is skewed to pro residues.

It belongs to the PA-phosphatase related phosphoesterase family.

Its subcellular location is the membrane. This Bos taurus (Bovine) protein is Phospholipid phosphatase-related protein type 2.